The sequence spans 225 residues: Glutathione S-transferase-like protein tpcF (225 aa).

In terms of domain architecture, GST N-terminal spans 4 to 85 (IQPITVYGKG…YLVSHYDPDH (82 aa)). A GST C-terminal domain is found at 92 to 225 (GSNLAALATQ…KGMADIFPST (134 aa)).

This sequence belongs to the GST superfamily. In terms of tissue distribution, specifically expressed in conidia.

It participates in secondary metabolite biosynthesis. Glutathione S-transferase-like protein; part of the gene cluster that mediates the biosynthesis of trypacidin, a mycotoxin with antiprotozoal activity and that plays a role in the infection process. The pathway begins with the synthesis of atrochrysone thioester by the polyketide synthase (PKS) tpcC. The atrochrysone carboxyl ACP thioesterase tpcB then breaks the thioester bond and releases the atrochrysone carboxylic acid from tpcC. The decarboxylase tpcK converts atrochrysone carboxylic acid to atrochrysone which is further reduced into emodin anthrone. The next step is performed by the emodin anthrone oxygenase tpcL that catalyzes the oxidation of emodinanthrone to emodin. Emodin O-methyltransferase encoded by tpcA catalyzes methylation of the 8-hydroxy group of emodin to form questin. Ring cleavage of questin by questin oxidase tpcI leads to desmethylsulochrin via several intermediates including questin epoxide. Another methylation step catalyzed by tpcM leads to the formation of sulochrin which is further converted to monomethylsulfochrin by tpcH. Finally, the tpcJ catalyzes the conversion of monomethylsulfochrin to trypacidin. Trypacidin is toxic for human pulmonary and bronchial epithelial cells by initiating the intracellular formation of nitric oxide (NO) and hydrogen peroxide (H(2)O(2)), thus triggering host necrotic cell death. The trypacidin pathway is also able to produce endocrocin via a distinct route from the endocrocin Enc pathway. The chain is Glutathione S-transferase-like protein tpcF from Aspergillus fumigatus (strain ATCC MYA-4609 / CBS 101355 / FGSC A1100 / Af293) (Neosartorya fumigata).